We begin with the raw amino-acid sequence, 358 residues long: Ganglioside-induced differentiation-associated protein 1 (358 aa).

Positions 24–105 (VHLILYHWTH…YLEQTFLDER (82 aa)) constitute a GST N-terminal domain. Glycyl lysine isopeptide (Lys-Gly) (interchain with G-Cter in ubiquitin) cross-links involve residues lysine 50, lysine 172, lysine 173, lysine 188, and lysine 190. The GST C-terminal domain occupies 153–309 (PAYATTRIRS…LISAVLPTAF (157 aa)). Position 203 is an N6-acetyllysine; alternate (lysine 203). Lysine 203 participates in a covalent cross-link: Glycyl lysine isopeptide (Lys-Gly) (interchain with G-Cter in ubiquitin); alternate. Residues lysine 206, lysine 207, and lysine 214 each participate in a glycyl lysine isopeptide (Lys-Gly) (interchain with G-Cter in ubiquitin) cross-link. The next 2 helical transmembrane spans lie at 292 to 312 (VLGH…FRVA) and 320 to 340 (LGST…FMLF). Residues 320-358 (LGSTLVVGLLVGMGYFAFMLFRRRLGSMILALRPRPNYF) are required for mitochondrial localization.

The protein belongs to the GST superfamily. Homodimer. Ubiquitinated by PRKN during mitophagy, leading to its degradation and enhancement of mitophagy. Deubiquitinated by USP30. In terms of tissue distribution, expressed in brain, spinal cord, muscles and intestinal villi. In the central nervous system expressed most prominently in the cortex, cerebellum, thalamus, olfactory bulb, and spinal cord. Expressed also in sciatic nerves and in dorsal root ganglia.

It is found in the mitochondrion outer membrane. The protein resides in the cytoplasm. Functionally, regulates the mitochondrial network by promoting mitochondrial fission. The chain is Ganglioside-induced differentiation-associated protein 1 (Gdap1) from Mus musculus (Mouse).